The following is a 116-amino-acid chain: Iron-sulfur cluster insertion protein ErpA (116 aa).

Cys-44, Cys-108, and Cys-110 together coordinate iron-sulfur cluster.

It belongs to the HesB/IscA family. As to quaternary structure, homodimer. It depends on iron-sulfur cluster as a cofactor.

Required for insertion of 4Fe-4S clusters for at least IspG. In Shewanella denitrificans (strain OS217 / ATCC BAA-1090 / DSM 15013), this protein is Iron-sulfur cluster insertion protein ErpA.